The following is a 272-amino-acid chain: MNKIFAAFKPKGLSSNAFLSTLKKKYKNKKAGYSGTLDPFAKGVLIVAFGQYTKLFRFLKKTPKTYKATLWLGVYSLSLDDQNIKEIQNIKEFDLANLKQIIDQMQGIISYTPPQFSAKRINGTRAYELAKKGIEANLKPCQMEVFDCKILSYNHPFLNIEITVSEGAYIRSYCELFARKLGINATLSSLERIKEGKFVYNNEKSLNVLKYINLKPNFIKDLNKLENGAKIFVEELEFHDEGDYYIETEKYFSIINIKENTVKYLLNKVEKC.

Catalysis depends on Asp38, which acts as the Nucleophile.

It belongs to the pseudouridine synthase TruB family. Type 1 subfamily.

It carries out the reaction uridine(55) in tRNA = pseudouridine(55) in tRNA. Functionally, responsible for synthesis of pseudouridine from uracil-55 in the psi GC loop of transfer RNAs. In Campylobacter jejuni (strain RM1221), this protein is tRNA pseudouridine synthase B.